The sequence spans 338 residues: Fructose-1,6-bisphosphatase 1 (338 aa).

Alanine 2 bears the N-acetylalanine mark. Residues 18–22 and 28–32 each bind AMP; these read VMEEG and TGELT. Mg(2+)-binding residues include aspartate 69 and glutamate 98. 113–114 serves as a coordination point for AMP; that stretch reads KY. 3 residues coordinate Mg(2+): aspartate 119, leucine 121, and aspartate 122. Residue 122–125 coordinates substrate; sequence DGSS. Residue arginine 141 participates in AMP binding. The residue at position 151 (lysine 151) is an N6-succinyllysine. Substrate-binding positions include 213-216, 244-249, tyrosine 265, and 275-277; these read NEGY, RYVGSM, and KLR. A phosphotyrosine mark is found at tyrosine 216, tyrosine 245, and tyrosine 265. Mg(2+) is bound at residue glutamate 281.

It belongs to the FBPase class 1 family. In terms of assembly, homotetramer. The cofactor is Mg(2+). Expressed in pancreatic islets.

The catalysed reaction is beta-D-fructose 1,6-bisphosphate + H2O = beta-D-fructose 6-phosphate + phosphate. The protein operates within carbohydrate biosynthesis; gluconeogenesis. With respect to regulation, subject to complex allosteric regulation. The enzyme can assume an active R-state, or an inactive T-state. Intermediate conformations may exist. AMP acts as an allosteric inhibitor. AMP binding affects the turnover of bound substrate and not the affinity for substrate. Fructose 2,6-bisphosphate acts as a competitive inhibitor. Fructose 2,6-bisphosphate and AMP have synergistic effects. In terms of biological role, catalyzes the hydrolysis of fructose 1,6-bisphosphate to fructose 6-phosphate in the presence of divalent cations, acting as a rate-limiting enzyme in gluconeogenesis. Plays a role in regulating glucose sensing and insulin secretion of pancreatic beta-cells. Appears to modulate glycerol gluconeogenesis in liver. Important regulator of appetite and adiposity; increased expression of the protein in liver after nutrient excess increases circulating satiety hormones and reduces appetite-stimulating neuropeptides and thus seems to provide a feedback mechanism to limit weight gain. The protein is Fructose-1,6-bisphosphatase 1 (FBP1) of Homo sapiens (Human).